The chain runs to 430 residues: Purine nucleoside phosphorylase LACC1 (430 aa).

The residue at position 247 (K247) is an N6-acetyllysine. 3 residues coordinate Zn(2+): H250, C284, and H301.

This sequence belongs to the purine nucleoside phosphorylase YfiH/LACC1 family. In terms of assembly, interacts with FASN. Interacts with SDHA. Interacts with ATF6, EIF2AK3 and ERN1. Post-translationally, phosphorylated on tyrosine residues. As to expression, predominantly expressed in myeloid cells. Highly expressed in primary macrophages and dendritic cells sorted from the peritoneum or spleen, respectively (at protein level).

The protein resides in the cytoplasm. It is found in the nucleus. It localises to the endoplasmic reticulum. Its subcellular location is the peroxisome. The catalysed reaction is adenosine + phosphate = alpha-D-ribose 1-phosphate + adenine. It carries out the reaction inosine + phosphate = alpha-D-ribose 1-phosphate + hypoxanthine. The enzyme catalyses guanosine + phosphate = alpha-D-ribose 1-phosphate + guanine. It catalyses the reaction S-methyl-5'-thioadenosine + phosphate = 5-(methylsulfanyl)-alpha-D-ribose 1-phosphate + adenine. The catalysed reaction is adenosine + H2O + H(+) = inosine + NH4(+). Functionally, purine nucleoside enzyme that catalyzes the phosphorolysis of adenosine, guanosine and inosine nucleosides, yielding D-ribose 1-phosphate and the respective free bases, adenine, guanine and hypoxanthine. Also catalyzes the phosphorolysis of S-methyl-5'-thioadenosine into adenine and S-methyl-5-thio-alpha-D-ribose 1-phosphate. Also has adenosine deaminase activity. Acts as a regulator of innate immunity in macrophages by modulating the purine nucleotide metabolism, thereby regulating the metabolic function and bioenergetic state of macrophages. Enables a purine nucleotide cycle between adenosine and inosine monophosphate and adenylosuccinate that prevents cytoplasmic acidification and balances the cytoplasmic-mitochondrial redox interface. The purine nucleotide cycle consumes aspartate and releases fumarate in a manner involving fatty acid oxidation and ATP-citrate lyase activity. Participates in pattern recognition receptor-induced cytokines in macrophages: associates with the NOD2-signaling complex and promotes optimal NOD2-induced signaling, cytokine secretion and bacterial clearance. Localizes to the endoplasmic reticulum upon PRR stimulation of macrophages and associates with endoplasmic reticulum-stress sensors, promoting the endoplasmic reticulum unfolded protein response (UPR). Does not show laccase activity. The protein is Purine nucleoside phosphorylase LACC1 of Mus musculus (Mouse).